Consider the following 463-residue polypeptide: Nuclear hormone receptor family member nhr-79 (463 aa).

A DNA-binding region (nuclear receptor) is located at residues 3-81; it reads RGKCMVCDSP…AGMMRDLVQA (79 aa). 2 NR C4-type zinc fingers span residues 6-27 and 43-64; these read CMVCDSPNATNYHFGAQSCKAC and CLGDGVHSCKIDHTLRLNCRHC. The segment at 83–119 is disordered; it reads REIKSDKGKNSRNSSQSEDFFSPPPEQPGPSNYFDQF. An NR LBD domain is found at 203–463; it reads YTEQVINLNM…ILKDMLKFQY (261 aa).

This sequence belongs to the nuclear hormone receptor family.

It localises to the nucleus. Its function is as follows. Orphan nuclear receptor. This Caenorhabditis elegans protein is Nuclear hormone receptor family member nhr-79 (nhr-79).